Here is a 117-residue protein sequence, read N- to C-terminus: UPF0122 protein Teth39_1278 (117 aa).

Belongs to the UPF0122 family.

Might take part in the signal recognition particle (SRP) pathway. This is inferred from the conservation of its genetic proximity to ftsY/ffh. May be a regulatory protein. This is UPF0122 protein Teth39_1278 from Thermoanaerobacter pseudethanolicus (strain ATCC 33223 / 39E) (Clostridium thermohydrosulfuricum).